The following is a 455-amino-acid chain: Putative PTS system EIIBC component YbbF (455 aa).

Residues 8 to 90 (HHLAQKILEL…SKLVSAEEGA (83 aa)) enclose the PTS EIIB type-1 domain. The active-site Phosphocysteine intermediate; for EIIB activity is the C30. One can recognise a PTS EIIC type-1 domain in the interval 116 to 455 (RKIASIFIPL…YKDEMASQFD (340 aa)). The next 10 membrane-spanning stretches (helical) occupy residues 118-138 (IASI…ITGI), 154-174 (IAII…ILVG), 181-201 (FGGT…PEIA), 210-230 (LLPG…IAYT), 250-270 (VSLL…GGFI), 281-301 (ILDI…LPLV), 325-345 (LLPI…AVFV), 355-375 (AIAG…IFGV), 399-419 (YFQV…FLVL), and 423-443 (IILY…LTYA).

It localises to the cell membrane. The phosphoenolpyruvate-dependent sugar phosphotransferase system (sugar PTS), a major carbohydrate active -transport system, catalyzes the phosphorylation of incoming sugar substrates concomitantly with their translocation across the cell membrane. This is Putative PTS system EIIBC component YbbF (ybbF) from Bacillus subtilis (strain 168).